Consider the following 341-residue polypeptide: Oxidoreductase swnN (341 aa).

This sequence belongs to the NmrA-type oxidoreductase family. Isoflavone reductase subfamily.

Its pathway is mycotoxin biosynthesis. Functionally, oxidoreductase; part of the gene cluster that mediates the biosynthesis of swainsonine (SW), a cytotoxic fungal alkaloid and a potential cancer therapy drug. Swainsonine production occurs via a multibranched pathway and is dispensable for fungal colonization of plants and infection of insect hosts. The first step of swainsonine biosynthesis is the production of the precursor pipecolic acid (PA) via conversion of L-lysine (Lys) to 1-piperideine-6-carboxylate (P6C) by the aminotransferase swnA, the latter being further reduced to PA by the reductase swnR. PA can be converted from lysine by both the SW biosynthetic cluster and the unclustered genes such as lysine cyclodeaminase. The PKS-NRPS hybrid synthetase swnK uptakes and condensates PA and malonyl-CoA with and without skipping of the ketoreductase (KR) domain in order to produce 3 intermediates, 1-oxoindolizidine, (1S)-1-hydroxyindolizin, and (1R)-1-hydroxyindolizine; with the transisomer (1S)-1-hydroxyindolizin being predominant. The terminal thioester reductase (TE) domain of swnK is involved in reduction of the thioester bond to release the intermediate aldehydes. The oxidoreductase swnN could contribute to the reduction of 1-oxoindolizidine to (1S)-1-hydroxyindolizin and (1R)-1-hydroxyindolizine, contributing to the major route of SW production. The dioxygenase swnH2 would be responsible for the oxidization of (1R)-1-hydroxyindolizine into (1R,2S)-1,2-dihydroxyindolizine and of (1S)-1-hydroxyindolizin to yield both (1R,2S)-1,2-dihydroxyindolizine and (1S,2S)-1,2-dihydroxyindolizine. The dioxygenase swnH1 then performs the conversion of the 1,2-dihydroxyindolizine epimers to SW. This is Oxidoreductase swnN from Metarhizium robertsii (strain ARSEF 23 / ATCC MYA-3075) (Metarhizium anisopliae (strain ARSEF 23)).